A 327-amino-acid polypeptide reads, in one-letter code: Polyprenyl transferase esdpC (327 aa).

Transmembrane regions (helical) follow at residues Tyr35–Ser54, Leu73–Ile93, Glu118–Leu138, Gly140–Gly160, Tyr171–Ile191, Ile202–Ala222, Val239–Leu259, and Glu307–Ser327.

This sequence belongs to the UbiA prenyltransferase family. Mg(2+) serves as cofactor.

It localises to the membrane. The protein operates within secondary metabolite biosynthesis; terpenoid biosynthesis. In terms of biological role, olyprenyl transferase; part of the cluster that mediates the biosynthesis of shearones, diterpenoid pyrones (DPs) which are structurally diverse meroterpenoids consisting of a diterpene linked by a pyrone, and which may exhibit a range of bioactivities. Within the pathway, esdpC takes part to the biosynthesis of the molecular scaffold by catalyzing the C-3 geranylgeranylation reaction of the alpha-pyrone produced by esdpA. The molecular scaffold is commonly biosynthesized by a series of enzymes including the non-reducing polyketide synthase (NR-PKS) esdpA that generates an alpha-pyrone; the prenyltransferase esdpC that attaches a geranylgeranyl pyrophosphate (GGPP) produced by the GGPP synthase (GGPPS) esdpD onto the pyrone unit; the FAD-dependent monooxygenase esdpE that converts an olefin on the diterpene unit into an epoxide; and the terpene cyclase esdpB that catalyzes the cyclization reactions to give the molecular backbone shearone A. In the modification steps, esdpF oxidizes the hydroxy group to a ketone at C-3 and esdpG then attaches hydroxy groups at both C-11 and C-12. After that, esdpI hydroxylates at C-20 and esdpH hydroxylates at C-6'. The ether bridge is generated by nucleophilic attack of the hydroxy group at C-20 to the carbonyl carbon at C-3. EsdpH can also functions prior to esdpI. The different combinations of these modification enzymes lead to the production of diverse shearone derivatives, shearone I being the end product of the pathway. The alpha-ketoglutarate-dependent dioxygenase esdpJ seems not to be involved in this pathway. This Penicillium shearii (Eupenicillium shearii) protein is Polyprenyl transferase esdpC.